A 1037-amino-acid polypeptide reads, in one-letter code: Probable inorganic carbon transporter subunit DabA 1 (1037 aa).

Residues Cys460, Asp462, His719, and Cys734 each coordinate Zn(2+).

This sequence belongs to the inorganic carbon transporter (TC 9.A.2) DabA family. In terms of assembly, forms a complex with DabB. Requires Zn(2+) as cofactor.

It is found in the cell inner membrane. Its function is as follows. Part of an energy-coupled inorganic carbon pump. In Nitrobacter winogradskyi (strain ATCC 25391 / DSM 10237 / CIP 104748 / NCIMB 11846 / Nb-255), this protein is Probable inorganic carbon transporter subunit DabA 1.